A 641-amino-acid chain; its full sequence is 1-deoxy-D-xylulose-5-phosphate synthase (641 aa).

Thiamine diphosphate-binding positions include His-71 and 112–114 (SHA). Asp-144 provides a ligand contact to Mg(2+). Thiamine diphosphate contacts are provided by residues 145–146 (GA), Asn-173, Tyr-284, and Glu-365. Asn-173 provides a ligand contact to Mg(2+).

It belongs to the transketolase family. DXPS subfamily. In terms of assembly, homodimer. Requires Mg(2+) as cofactor. Thiamine diphosphate is required as a cofactor.

It catalyses the reaction D-glyceraldehyde 3-phosphate + pyruvate + H(+) = 1-deoxy-D-xylulose 5-phosphate + CO2. It participates in metabolic intermediate biosynthesis; 1-deoxy-D-xylulose 5-phosphate biosynthesis; 1-deoxy-D-xylulose 5-phosphate from D-glyceraldehyde 3-phosphate and pyruvate: step 1/1. In terms of biological role, catalyzes the acyloin condensation reaction between C atoms 2 and 3 of pyruvate and glyceraldehyde 3-phosphate to yield 1-deoxy-D-xylulose-5-phosphate (DXP). This Mycobacterium avium (strain 104) protein is 1-deoxy-D-xylulose-5-phosphate synthase.